Here is a 452-residue protein sequence, read N- to C-terminus: Putative tripartite motif-containing protein 49B (452 aa).

The RING-type zinc finger occupies 15-56 (CPICMNYFIDPVTIDCGHSFCRPCFYLNWKDSPFLVQCSECT). The B box-type zinc-finger motif lies at 88 to 129 (SEEQMCGTHRETKKMFCEVDRSLLCLLCSSSQEHRDHRHCPI). Cys-93, His-96, Cys-115, and His-121 together coordinate Zn(2+). In terms of domain architecture, B30.2/SPRY spans 269–452 (ELSAGPITGL…LRPIFCCIHF (184 aa)).

This sequence belongs to the TRIM/RBCC family.

The sequence is that of Putative tripartite motif-containing protein 49B (TRIM49B) from Homo sapiens (Human).